Here is a 210-residue protein sequence, read N- to C-terminus: Small ribosomal subunit protein uS5 (210 aa).

Residues 1–23 (MARTPSSDRPERGRGGERGDRPN) show a composition bias toward basic and acidic residues. Residues 1 to 40 (MARTPSSDRPERGRGGERGDRPNRGRGGAEQTPREREESE) are disordered. Residues 41-104 (FVDKLVHINR…EQAKRNMIKI (64 aa)) form the S5 DRBM domain.

This sequence belongs to the universal ribosomal protein uS5 family. In terms of assembly, part of the 30S ribosomal subunit. Contacts proteins S4 and S8.

Its function is as follows. With S4 and S12 plays an important role in translational accuracy. In terms of biological role, located at the back of the 30S subunit body where it stabilizes the conformation of the head with respect to the body. The chain is Small ribosomal subunit protein uS5 from Paramagnetospirillum magneticum (strain ATCC 700264 / AMB-1) (Magnetospirillum magneticum).